A 283-amino-acid polypeptide reads, in one-letter code: Pantothenate synthetase (283 aa).

An ATP-binding site is contributed by 30–37 (MGNLHDGH). His37 (proton donor) is an active-site residue. Gln61 is a binding site for (R)-pantoate. Gln61 serves as a coordination point for beta-alanine. 149–152 (GEKD) is an ATP binding site. Gln155 lines the (R)-pantoate pocket. 186–189 (LSSR) is a binding site for ATP.

Belongs to the pantothenate synthetase family. In terms of assembly, homodimer.

The protein localises to the cytoplasm. The enzyme catalyses (R)-pantoate + beta-alanine + ATP = (R)-pantothenate + AMP + diphosphate + H(+). It functions in the pathway cofactor biosynthesis; (R)-pantothenate biosynthesis; (R)-pantothenate from (R)-pantoate and beta-alanine: step 1/1. Functionally, catalyzes the condensation of pantoate with beta-alanine in an ATP-dependent reaction via a pantoyl-adenylate intermediate. In Escherichia coli (strain SMS-3-5 / SECEC), this protein is Pantothenate synthetase.